The following is a 526-amino-acid chain: Osmo-independent choline transporter BetT1 (526 aa).

Residues 1 to 17 are Cytoplasmic-facing; the sequence is MWSKRDEQKTYPPIRLN. The helical transmembrane segment at 18-38 threads the bilayer; it reads PFVFWSSAISISIFGMLFVLF. Topologically, residues 39–56 are periplasmic; that stretch reads PETSQHGLTWIQQQVNQL. The helical transmembrane segment at 57-77 threads the bilayer; the sequence is FGWYYMLVIILSLGFVAWLAF. The Cytoplasmic segment spans residues 78-93; the sequence is SQVGNIPLGKAQDKPE. The helical transmembrane segment at 94 to 114 threads the bilayer; that stretch reads FGYLVWTSMLFSAGIGIALLY. Residues 115 to 148 lie on the Periplasmic side of the membrane; sequence YGVAEPVDHFLRPPEGQGGTVEAAQNAMMYSFLH. A helical transmembrane segment spans residues 149-169; the sequence is WGIHGWVLYALVGVTLGYFAF. The Cytoplasmic segment spans residues 170 to 200; sequence RRDLPLALRSALYPIFGERIHGLVGHMVDGF. A helical transmembrane segment spans residues 201–221; sequence GILATIISLVTNLGIGALVMI. Topologically, residues 222-236 are periplasmic; that stretch reads SGISYLFPDLPNTSS. A helical transmembrane segment spans residues 237–257; it reads TLVVTVIMMMLVATLTTVIGI. Topologically, residues 258–272 are cytoplasmic; the sequence is EKGLAWLSRINLRLL. A helical membrane pass occupies residues 273 to 293; that stretch reads YLLLLFVFLTGPTNHLLNGLV. The Periplasmic segment spans residues 294–323; that stretch reads QNTGDYLSHFVQKSFDLYLYDKNATGWLAS. Residues 324-344 traverse the membrane as a helical segment; that stretch reads WTIFYWAWWIAWAPFVGMFIA. Topologically, residues 345–354 are cytoplasmic; sequence RISKGRTIRE. A helical transmembrane segment spans residues 355-375; that stretch reads VVLGVCLIPLGFTLAWISIFG. Residues 376 to 417 are Periplasmic-facing; sequence NTAIDLILNHGQQIIGSLVIQDPALSLFKLLEYLPFHPYVAG. Residues 418–438 form a helical membrane-spanning segment; that stretch reads IVVVICFVLFLTPVGSGTLMI. At 439 to 457 the chain is on the cytoplasmic side; that stretch reads ANLSSQGGSSDSDSPIWLR. The chain crosses the membrane as a helical span at residues 458–478; that stretch reads VFWSIAITIVSIGLLLAGSFS. Over 479–482 the chain is Periplasmic; sequence AMQS. The chain crosses the membrane as a helical span at residues 483 to 503; the sequence is AVVLCGLPFSVILLLYMFGLA. Over 504–526 the chain is Cytoplasmic; it reads KALKQETQQPVVESHTTETSGSD.

Belongs to the BCCT transporter (TC 2.A.15) family.

Its subcellular location is the cell inner membrane. Functionally, sodium-independent high-affinity choline uptake system. Uptake is not proton coupled. May play a role in metabolic adaptation to choline-containing environments. In Acinetobacter baylyi (strain ATCC 33305 / BD413 / ADP1), this protein is Osmo-independent choline transporter BetT1.